A 235-amino-acid polypeptide reads, in one-letter code: 2-C-methyl-D-erythritol 4-phosphate cytidylyltransferase (235 aa).

The protein belongs to the IspD/TarI cytidylyltransferase family. IspD subfamily.

The catalysed reaction is 2-C-methyl-D-erythritol 4-phosphate + CTP + H(+) = 4-CDP-2-C-methyl-D-erythritol + diphosphate. Its pathway is isoprenoid biosynthesis; isopentenyl diphosphate biosynthesis via DXP pathway; isopentenyl diphosphate from 1-deoxy-D-xylulose 5-phosphate: step 2/6. In terms of biological role, catalyzes the formation of 4-diphosphocytidyl-2-C-methyl-D-erythritol from CTP and 2-C-methyl-D-erythritol 4-phosphate (MEP). The polypeptide is 2-C-methyl-D-erythritol 4-phosphate cytidylyltransferase (Pseudomonas putida (strain ATCC 700007 / DSM 6899 / JCM 31910 / BCRC 17059 / LMG 24140 / F1)).